The primary structure comprises 118 residues: Elongin-B (118 aa).

An N-acetylmethionine modification is found at methionine 1. In terms of domain architecture, Ubiquitin-like spans 1-66; sequence MDVFLMIRRH…LGECGFTSQT (66 aa). The residue at position 84 (threonine 84) is a Phosphothreonine. A disordered region spans residues 92-118; the sequence is PFSSPPELPDVMKPQDSGSSANEQAVQ. The segment covering 107–118 has biased composition (polar residues); the sequence is DSGSSANEQAVQ. A phosphoserine mark is found at serine 108 and serine 111.

This sequence belongs to the Elongin B family. In terms of assembly, heterotrimer of an A (ELOA, ELOA2 or ELOA3P), ELOB and ELOC subunit. The elongin BC complex interacts with EPOP; leading to recruit the elongin BC complex to Polycomb group (PcG) target genes, thereby restricting excessive activity of the PRC2/EED-EZH2 complex. Component of multiple cullin-RING E3 ubiquitin-protein ligase complexes composed of Elongin BC (ELOB and ELOC), a cullin (either CUL2 or CUL5), a catalytic subunit (either RBX1 or RNF7/RBX2), as well as a substrate adapter protein that can be either ASB2, ASB9, ASB11, KLHDC2, KLHDC3, KLHDC10, APPBP2, FEM1A, FEM1B, FEM1C, LRR1, PCMTD1, SOCS1, SOCS2, SOCS5, SPSB1, SPSB3, ELOA, VHL, WSB1 or RAB40C. As part of the Elongin BC E3 ubiquitin ligase complex; interacts with NRBP1. May also interact with DCUN1D1, DCUN1D2, DCUN1D3 and DCUN1D5. May form oligomers as a KLHDC2/KLHDC3-ELOB-ELOC complex; this interaction is autoinhibitory for the E3 ligase complex as the substrate-binding site of KLHDC2/KLHDC3 is blocked in the oligomer. (Microbial infection) Following infection by HIV-1 virus, component of a cullin-5-RING E3 ubiquitin-protein ligase complex (ECS complex) hijacked by the HIV-1 Vif protein. As to quaternary structure, (Microbial infection) Substrate adapter protein can be a viral protein such as HIV Vif. In terms of assembly, (Microbial infection) Interacts with molluscum contagiosum virus MC132. (Microbial infection) Interacts with herpes virus 8 virus protein LANA1.

Its subcellular location is the nucleus. It functions in the pathway protein modification; protein ubiquitination. Its function is as follows. SIII, also known as elongin, is a general transcription elongation factor that increases the RNA polymerase II transcription elongation past template-encoded arresting sites. Subunit A is transcriptionally active and its transcription activity is strongly enhanced by binding to the dimeric complex of the SIII regulatory subunits B and C (elongin BC complex). In embryonic stem cells, the elongin BC complex is recruited by EPOP to Polycomb group (PcG) target genes in order generate genomic region that display both active and repressive chromatin properties, an important feature of pluripotent stem cells. Functionally, core component of multiple cullin-2 and cullin-5-RING E3 ubiquitin-protein ligase complexes (ECS complexes), which mediate the ubiquitination of target proteins. By binding to BC-box motifs it seems to link target recruitment subunits, like VHL and members of the SOCS box family, to Cullin/RBX1 modules that activate E2 ubiquitination enzymes. Component the von Hippel-Lindau ubiquitination complex CBC(VHL). A number of ECS complexes (containing either KLHDC2, KLHDC3, KLHDC10, APPBP2, FEM1A, FEM1B or FEM1C as substrate-recognition component) are part of the DesCEND (destruction via C-end degrons) pathway, which recognizes a C-degron located at the extreme C terminus of target proteins, leading to their ubiquitination and degradation. The ECS(ASB9) complex mediates ubiquitination and degradation of CKB. As part of a multisubunit ubiquitin ligase complex, polyubiquitinates monoubiquitinated POLR2A. ECS(LRR1) ubiquitinates MCM7 and promotes CMG replisome disassembly by VCP and chromatin extraction during S-phase. As part of the ECS(RAB40C) complex, mediates ANKRD28 ubiquitination and degradation, thereby inhibiting protein phosphatase 6 (PP6) complex activity and focal adhesion assembly during cell migration. In terms of biological role, (Microbial infection) Following infection by HIV-1 virus, component of a cullin-5-RING E3 ubiquitin-protein ligase complex (ECS complex) hijacked by the HIV-1 Vif protein, which catalyzes ubiquitination and degradation of APOBEC3F and APOBEC3G. The complex can also ubiquitinate APOBEC3H to some extent. In Homo sapiens (Human), this protein is Elongin-B.